The primary structure comprises 253 residues: Ubiquinone/menaquinone biosynthesis C-methyltransferase UbiE (253 aa).

S-adenosyl-L-methionine-binding positions include Thr-76, Asp-97, and 125-126 (NA).

The protein belongs to the class I-like SAM-binding methyltransferase superfamily. MenG/UbiE family.

It carries out the reaction a 2-demethylmenaquinol + S-adenosyl-L-methionine = a menaquinol + S-adenosyl-L-homocysteine + H(+). The enzyme catalyses a 2-methoxy-6-(all-trans-polyprenyl)benzene-1,4-diol + S-adenosyl-L-methionine = a 5-methoxy-2-methyl-3-(all-trans-polyprenyl)benzene-1,4-diol + S-adenosyl-L-homocysteine + H(+). It functions in the pathway quinol/quinone metabolism; menaquinone biosynthesis; menaquinol from 1,4-dihydroxy-2-naphthoate: step 2/2. Its pathway is cofactor biosynthesis; ubiquinone biosynthesis. Methyltransferase required for the conversion of demethylmenaquinol (DMKH2) to menaquinol (MKH2) and the conversion of 2-polyprenyl-6-methoxy-1,4-benzoquinol (DDMQH2) to 2-polyprenyl-3-methyl-6-methoxy-1,4-benzoquinol (DMQH2). The protein is Ubiquinone/menaquinone biosynthesis C-methyltransferase UbiE of Stenotrophomonas maltophilia (strain R551-3).